We begin with the raw amino-acid sequence, 365 residues long: MQALLPIEQYDSLLAEKQKKLTALLAPFHAPALAVFPSPVQHYRMRAEFRIWHDKGDFYHIMFDQRTRQRYRVDCFPMASQLINQMMDTLLPLLKTNRVLHHKLFQIDYLSTLSNKIIVSLLYHKTLDEEWEQAAKQLKASLLQQGFDLQLIGRASKQKICLEQEFVDEVLTVHGKSYVYRQVENSFTQPNAIVNQKMLEWAVDCTQNSEGDLLELYCGNGNFSIALAQNFRKVLATEIAKPSVAAAQFNIAENSIKNLQIIRMSAEEFTQAMNGVREFHRLKGIDLNAYECNTIFVDPPRAGLDEETVKLVQNYDRILYISCNPHTLCDNLQHLCQTHRIEKAALFDQFPYTEHMEAGVWLIRK.

Residues Q189, Y217, N222, E238, and D298 each contribute to the S-adenosyl-L-methionine site. C323 functions as the Nucleophile in the catalytic mechanism. E357 functions as the Proton acceptor in the catalytic mechanism.

The protein belongs to the class I-like SAM-binding methyltransferase superfamily. RNA M5U methyltransferase family. TrmA subfamily.

The enzyme catalyses uridine(54) in tRNA + S-adenosyl-L-methionine = 5-methyluridine(54) in tRNA + S-adenosyl-L-homocysteine + H(+). It carries out the reaction uridine(341) in tmRNA + S-adenosyl-L-methionine = 5-methyluridine(341) in tmRNA + S-adenosyl-L-homocysteine + H(+). Dual-specificity methyltransferase that catalyzes the formation of 5-methyluridine at position 54 (m5U54) in all tRNAs, and that of position 341 (m5U341) in tmRNA (transfer-mRNA). The sequence is that of tRNA/tmRNA (uracil-C(5))-methyltransferase from Pasteurella multocida (strain Pm70).